Reading from the N-terminus, the 140-residue chain is Large ribosomal subunit protein uL16 (140 aa).

The protein belongs to the universal ribosomal protein uL16 family. Part of the 50S ribosomal subunit.

Binds 23S rRNA and is also seen to make contacts with the A and possibly P site tRNAs. The chain is Large ribosomal subunit protein uL16 from Geotalea uraniireducens (strain Rf4) (Geobacter uraniireducens).